Reading from the N-terminus, the 121-residue chain is uncharacterized protein (121 aa).

This sequence to M.jannaschii MJ0017 and MJ1466.

This is an uncharacterized protein from Aquifex aeolicus (strain VF5).